A 184-amino-acid chain; its full sequence is UPF0397 protein SA2477 (184 aa).

A run of 5 helical transmembrane segments spans residues 11–31 (VVAI…VVIP), 44–64 (AFLA…TGLV), 77–97 (AWWS…WIGL), 111–131 (MIYF…LIAP), and 148–168 (QGVI…TILL).

This sequence belongs to the UPF0397 family.

It is found in the cell membrane. The polypeptide is UPF0397 protein SA2477 (Staphylococcus aureus (strain N315)).